The following is a 117-amino-acid chain: MNAPPAFESFLLFEGEKKITINKDTKVPNACLFTINKEDHTLGNIIKSQLLKDPQVLFAGYKVPHPLEHKIIIRVQTTPDYSPQEAFTNAITDLISELSLLEERFRVAIKDKQEGIE.

Position 1 is an N-acetylmethionine (Met-1).

Belongs to the archaeal Rpo11/eukaryotic RPB11/RPC19 RNA polymerase subunit family. In terms of assembly, component of the RNA polymerase II (Pol II) core complex consisting of 12 subunits: a ten-subunit catalytic core composed of POLR2A/RPB1, POLR2B/RPB2, POLR2C/RPB3, POLR2I/RPB9, POLR2J/RPB11, POLR2E/RPABC1, POLR2F/RPABC2, POLR2H/RPABC3, POLR2K/RPABC4 and POLR2L/RPABC5 and a mobile stalk composed of two subunits POLR2D/RPB4 and POLR2G/RPB7, protruding from the core and functioning primarily in transcription initiation. Part of Pol II(G) complex, in which Pol II core associates with an additional subunit POLR2M; unlike conventional Pol II, Pol II(G) functions as a transcriptional repressor. Part of TBP-based Pol II pre-initiation complex (PIC), in which Pol II core assembles with general transcription factors and other specific initiation factors including GTF2E1, GTF2E2, GTF2F1, GTF2F2, TCEA1, ERCC2, ERCC3, GTF2H2, GTF2H3, GTF2H4, GTF2H5, GTF2A1, GTF2A2, GTF2B and TBP; this large multi-subunit PIC complex mediates DNA unwinding and targets Pol II core to the transcription start site where the first phosphodiester bond forms. Interacts with PTPN6; this interaction promotes the recruitment of RNA pol II to the PCK1 promoter.

The protein resides in the nucleus. Functionally, DNA-dependent RNA polymerase catalyzes the transcription of DNA into RNA using the four ribonucleoside triphosphates as substrates. Component of RNA polymerase II which synthesizes mRNA precursors and many functional non-coding RNAs. Pol II is the central component of the basal RNA polymerase II transcription machinery. It is composed of mobile elements that move relative to each other. POLR2J/RPB11 is part of the core element with the central large cleft. This chain is DNA-directed RNA polymerase II subunit RPB11 (POLR2J), found in Bos taurus (Bovine).